A 302-amino-acid polypeptide reads, in one-letter code: Arginase (302 aa).

Positions 103, 126, 128, and 130 each coordinate Mn(2+). Residues 128-132 (HGDLN), 139-141 (SGN), and Asp-180 contribute to the substrate site. Mn(2+) is bound by residues Asp-229 and Asp-231. Residues Thr-243 and Glu-274 each contribute to the substrate site.

This sequence belongs to the arginase family. Mn(2+) serves as cofactor.

The catalysed reaction is L-arginine + H2O = urea + L-ornithine. Its pathway is nitrogen metabolism; urea cycle; L-ornithine and urea from L-arginine: step 1/1. The chain is Arginase (arg) from Staphylococcus aureus (strain COL).